The sequence spans 316 residues: Daunorubicin resistance ATP-binding protein DrrA3 (316 aa).

Residues 6 to 236 (ITVDGAEKRY…TGGDRIDVVL (231 aa)) form the ABC transporter domain. 38 to 45 (GPNGAGKT) is an ATP binding site.

This sequence belongs to the ABC transporter superfamily. Drug exporter-1 (DrugE1) (TC 3.A.1.105) family. As to quaternary structure, the complex is probably composed of two ATP-binding proteins (DrrA3) and two transmembrane proteins (DrrB3).

Its subcellular location is the cell membrane. It catalyses the reaction daunorubicin(in) + ATP + H2O = daunorubicin(out) + ADP + phosphate + H(+). Its function is as follows. Part of the ABC transporter complex DrrA3B3 involved in daunorubicin efflux. Responsible for energy coupling to the transport system. Confers self-resistance to daunorubicin, an antibiotic produced by S.coeruleorubidus. The efficiency of DrrA3B3 to export daunorubicin is probably lower than that of DrrA1B1 or DrrA2B2. The polypeptide is Daunorubicin resistance ATP-binding protein DrrA3 (Streptomyces coeruleorubidus).